Reading from the N-terminus, the 141-residue chain is Hemoglobin subunit alpha-D (141 aa).

The 141-residue stretch at 1 to 141 (MLTADDKKLL…VAAVLAEKYR (141 aa)) folds into the Globin domain. Residues histidine 58 and histidine 87 each contribute to the heme b site.

It belongs to the globin family. As to quaternary structure, heterotetramer of two alpha-D chains and two beta chains. As to expression, red blood cells.

Its function is as follows. Involved in oxygen transport from the lung to the various peripheral tissues. In Anser anser anser (Western greylag goose), this protein is Hemoglobin subunit alpha-D (HBAD).